The primary structure comprises 211 residues: ATP-dependent Clp protease proteolytic subunit (211 aa).

Ser114 (nucleophile) is an active-site residue. His139 is an active-site residue.

Belongs to the peptidase S14 family. In terms of assembly, fourteen ClpP subunits assemble into 2 heptameric rings which stack back to back to give a disk-like structure with a central cavity, resembling the structure of eukaryotic proteasomes.

It is found in the cytoplasm. It carries out the reaction Hydrolysis of proteins to small peptides in the presence of ATP and magnesium. alpha-casein is the usual test substrate. In the absence of ATP, only oligopeptides shorter than five residues are hydrolyzed (such as succinyl-Leu-Tyr-|-NHMec, and Leu-Tyr-Leu-|-Tyr-Trp, in which cleavage of the -Tyr-|-Leu- and -Tyr-|-Trp bonds also occurs).. Functionally, cleaves peptides in various proteins in a process that requires ATP hydrolysis. Has a chymotrypsin-like activity. Plays a major role in the degradation of misfolded proteins. The chain is ATP-dependent Clp protease proteolytic subunit from Pseudomonas fluorescens (strain SBW25).